Consider the following 271-residue polypeptide: Potential ATP-binding protein (271 aa).

Residue 34–41 (GQPGVGKT) participates in ATP binding.

The polypeptide is Potential ATP-binding protein (Staphylococcus aureus).